The sequence spans 94 residues: Small ribosomal subunit protein uS19 (94 aa).

This sequence belongs to the universal ribosomal protein uS19 family.

Its function is as follows. Protein S19 forms a complex with S13 that binds strongly to the 16S ribosomal RNA. In Buchnera aphidicola subsp. Cinara cedri (strain Cc), this protein is Small ribosomal subunit protein uS19.